The primary structure comprises 309 residues: Putative rhizopine-binding protein (309 aa).

The first 20 residues, 1-20, serve as a signal peptide directing secretion; sequence MKKFIIGIAAAVLVSTAAHA.

It belongs to the bacterial solute-binding protein 2 family.

It is found in the periplasm. Functionally, involved in rhizopine (L-3-O-methyl-scyllo-inosamine) catabolism. Could be involved in its high affinity transport. This chain is Putative rhizopine-binding protein (mocB), found in Rhizobium meliloti (Ensifer meliloti).